The chain runs to 271 residues: uncharacterized protein (271 aa).

This sequence belongs to the HAD-like hydrolase superfamily.

This is an uncharacterized protein from Staphylococcus aureus (strain Mu50 / ATCC 700699).